A 524-amino-acid polypeptide reads, in one-letter code: Probable cytochrome P450 519C1 (524 aa).

Residues 1-21 form a helical membrane-spanning segment; it reads MNILLLIFYFLVCFLIFDFIK. Cys-470 provides a ligand contact to heme.

Belongs to the cytochrome P450 family. It depends on heme as a cofactor.

It localises to the membrane. This Dictyostelium discoideum (Social amoeba) protein is Probable cytochrome P450 519C1 (cyp519C1).